A 362-amino-acid polypeptide reads, in one-letter code: Apelin receptor A (362 aa).

At Met1–Leu37 the chain is on the extracellular side. Residue Asn19 is glycosylated (N-linked (GlcNAc...) asparagine). Cystine bridges form between Cys26–Cys286 and Cys108–Cys185. A helical transmembrane segment spans residues Leu38 to Phe58. Residues Thr59–Asn76 are Cytoplasmic-facing. Residues Leu77–Leu97 traverse the membrane as a helical segment. Over Gly98–Leu110 the chain is Extracellular. Residues Ser111–Phe131 form a helical membrane-spanning segment. Topologically, residues Asp132–Ser151 are cytoplasmic. A helical transmembrane segment spans residues Ile152 to Ile172. Residues Leu173–Asn199 are Extracellular-facing. The N-linked (GlcNAc...) asparagine glycan is linked to Asn181. Residues Phe200–Leu220 form a helical membrane-spanning segment. Over Met221–Arg248 the chain is Cytoplasmic. Residues Leu249–Ile269 traverse the membrane as a helical segment. Topologically, residues Leu270 to His296 are extracellular. A helical membrane pass occupies residues Pro297–Phe317. At Asp318–Val362 the chain is on the cytoplasmic side.

This sequence belongs to the G-protein coupled receptor 1 family. Expressed in all blood vessels including the posterior cardinal vein, intersomitic veins and the vitelline vein network. At the gastrula stage, exclusively expressed in the mesodermal layer and at the neurula stage in the lateral plate mesoderm. Larval expression is observed in the endothelium of the primary blood vessels and the forming heart.

The protein localises to the cell membrane. Its function is as follows. G protein-coupled receptor for peptide hormones apelin (apln) and apelin receptor early endogenous ligand (apela), that plays a role in the regulation of normal cardiovascular function and fluid homeostasis. When acting as apelin receptor, activates both G(i) protein pathway that inhibits adenylate cyclase activity, and the beta-arrestin pathway that promotes internalization of the receptor. Also functions as mechanoreceptor that is activated by pathological stimuli in a G-protein-independent fashion to induce beta-arrestin signaling, hence eliciting cardiac hypertrophy. However, the presence of apelin ligand blunts cardiac hypertrophic induction from APLNR/APJ on response to pathological stimuli. Plays a key role in early development such as gastrulation, blood vessels formation and heart morphogenesis by acting as a receptor for apela hormone, promoting endoderm and mesendoderm cell migration and regulating the migration of cells fated to become myocardial progenitors, respectively. Promotes angioblast migration toward the embryonic midline, i.e. the position of the future vessel formation, during vasculogenesis. May promote sinus venosus (SV)-derived endothelial cells migration into the developing heart to promote coronary blood vessel development. Required for cardiovascular development, particularly for intersomitic vein angiogenesis by acting as a receptor for apln hormone. Also plays a role in various processes in adults such as regulation of blood vessel formation, blood pressure, heart contractility, and heart failure. Acts upstream of the i/o type of G-alpha proteins in the differentiation of endothelium, erythroid cells, myeloid cells and cardiomyocytes. In Xenopus laevis (African clawed frog), this protein is Apelin receptor A (aplnr-a).